The chain runs to 732 residues: Protein FAR1-RELATED SEQUENCE 4 (732 aa).

In terms of domain architecture, FAR1 spans 11-97 (LFYKDYAKSV…VKEHNHDLLP (87 aa)). An MULE domain is found at 212–308 (VVSFETSYFV…CLWHVLDQLP (97 aa)). Residues 490–526 (YLVDWDEFKSDIYCSCRSFEYKGYLCRHAIVVLQMSG) form an SWIM-type zinc finger. The disordered stretch occupies residues 623 to 683 (QEENQYGSTS…ETVGEGSQEG (61 aa)). Residues 624-635 (EENQYGSTSTQI) show a composition bias toward polar residues.

Belongs to the FHY3/FAR1 family. In terms of tissue distribution, expressed in hypocotyls, rosette and cauline leaves, inflorescences stems, flowers and siliques.

It is found in the nucleus. In terms of biological role, putative transcription activator involved in regulating light control of development. This chain is Protein FAR1-RELATED SEQUENCE 4 (FRS4), found in Arabidopsis thaliana (Mouse-ear cress).